We begin with the raw amino-acid sequence, 203 residues long: MPHALPPLPYAYDALEPHIDALTMEIHHSKHHQTYVNNLNAALEGTPYAEQPVESLLRQLAGLPEKLRTPVVNNGGGHANHSLFWTVMSPQGGGRPDGDLGRAIDEQLGGFEAFKDAFTKAALTRFGSGWAWLSVTPQGSLLVESSGNQDSPLMNGNTPILGLDVWEHAYYLKYQNRRPEYIGAFYNVIDWREVARRYAQALA.

Residues His-27, His-81, Asp-164, and His-168 each coordinate Mn(2+).

This sequence belongs to the iron/manganese superoxide dismutase family. As to quaternary structure, homodimer. It depends on Mn(2+) as a cofactor.

It catalyses the reaction 2 superoxide + 2 H(+) = H2O2 + O2. Its function is as follows. Destroys superoxide anion radicals which are normally produced within the cells and which are toxic to biological systems. Partially complements double sodA-sodB deletions in E.coli. This chain is Superoxide dismutase [Mn], found in Pseudomonas aeruginosa (strain ATCC 15692 / DSM 22644 / CIP 104116 / JCM 14847 / LMG 12228 / 1C / PRS 101 / PAO1).